We begin with the raw amino-acid sequence, 158 residues long: 6,7-dimethyl-8-ribityllumazine synthase (158 aa).

Residues phenylalanine 24, 58-60 (AFE), and 82-84 (AVI) contribute to the 5-amino-6-(D-ribitylamino)uracil site. 87–88 (GT) is a binding site for (2S)-2-hydroxy-3-oxobutyl phosphate. Histidine 90 (proton donor) is an active-site residue. Phenylalanine 115 contacts 5-amino-6-(D-ribitylamino)uracil. Residue arginine 129 participates in (2S)-2-hydroxy-3-oxobutyl phosphate binding.

Belongs to the DMRL synthase family. In terms of assembly, forms an icosahedral capsid composed of 60 subunits, arranged as a dodecamer of pentamers.

The catalysed reaction is (2S)-2-hydroxy-3-oxobutyl phosphate + 5-amino-6-(D-ribitylamino)uracil = 6,7-dimethyl-8-(1-D-ribityl)lumazine + phosphate + 2 H2O + H(+). Its pathway is cofactor biosynthesis; riboflavin biosynthesis; riboflavin from 2-hydroxy-3-oxobutyl phosphate and 5-amino-6-(D-ribitylamino)uracil: step 1/2. In terms of biological role, catalyzes the formation of 6,7-dimethyl-8-ribityllumazine by condensation of 5-amino-6-(D-ribitylamino)uracil with 3,4-dihydroxy-2-butanone 4-phosphate. This is the penultimate step in the biosynthesis of riboflavin. The protein is 6,7-dimethyl-8-ribityllumazine synthase of Ectopseudomonas mendocina (strain ymp) (Pseudomonas mendocina).